We begin with the raw amino-acid sequence, 87 residues long: Large ribosomal subunit protein bL31B (87 aa).

Belongs to the bacterial ribosomal protein bL31 family. Type B subfamily. As to quaternary structure, part of the 50S ribosomal subunit.

The chain is Large ribosomal subunit protein bL31B from Corynebacterium kroppenstedtii (strain DSM 44385 / JCM 11950 / CIP 105744 / CCUG 35717).